Reading from the N-terminus, the 1040-residue chain is Probable starch synthase 4, chloroplastic/amyloplastic (1040 aa).

The transit peptide at 1 to 42 (MTTKLSSFCFLTHGLAGISCEREHGSSRRFFYLPSRRLVSTS) directs the protein to the chloroplast. The tract at residues 43-142 (CKMRQQRGFD…KSKTAKKKGE (100 aa)) is disordered. Basic and acidic residues-rich tracts occupy residues 52–61 (DSSKRQEVKK) and 112–124 (NHAD…KDDI). A coiled-coil region spans residues 187–466 (ELMTMIRSAE…EESKKKSRDE (280 aa)). The ADP site is built by K556, G559, and D562. The (1,4-alpha-D-glucosyl)n site is built by W679 and Q680. ADP-binding residues include R849, K854, K906, D908, Y916, L933, and T934.

Belongs to the glycosyltransferase 1 family. Bacterial/plant glycogen synthase subfamily. Interacts with PTST2. Interacts with PII1; the interaction is essential for the initiation of starch granules biosynthesis in leaf chloroplasts. As to expression, expressed in leaves and flowers.

The protein localises to the plastid. Its subcellular location is the chloroplast. It localises to the amyloplast. It is found in the chloroplast stroma. It catalyses the reaction [(1-&gt;4)-alpha-D-glucosyl](n) + ADP-alpha-D-glucose = [(1-&gt;4)-alpha-D-glucosyl](n+1) + ADP + H(+). Its pathway is glycan biosynthesis; starch biosynthesis. Functionally, probably involved in the priming of starch granule formation. May play a regulatory role in the control of starch accumulation in plastids. Is necessary and sufficient to establish the correct number of starch granules observed in chloroplasts. This is Probable starch synthase 4, chloroplastic/amyloplastic from Arabidopsis thaliana (Mouse-ear cress).